Here is a 367-residue protein sequence, read N- to C-terminus: UDP-N-acetylglucosamine--N-acetylmuramyl-(pentapeptide) pyrophosphoryl-undecaprenol N-acetylglucosamine transferase (367 aa).

Residues 13 to 15, Asn-125, Arg-165, Ser-192, and Gln-293 contribute to the UDP-N-acetyl-alpha-D-glucosamine site; that span reads TGG.

The protein belongs to the glycosyltransferase 28 family. MurG subfamily.

It is found in the cell inner membrane. It catalyses the reaction di-trans,octa-cis-undecaprenyl diphospho-N-acetyl-alpha-D-muramoyl-L-alanyl-D-glutamyl-meso-2,6-diaminopimeloyl-D-alanyl-D-alanine + UDP-N-acetyl-alpha-D-glucosamine = di-trans,octa-cis-undecaprenyl diphospho-[N-acetyl-alpha-D-glucosaminyl-(1-&gt;4)]-N-acetyl-alpha-D-muramoyl-L-alanyl-D-glutamyl-meso-2,6-diaminopimeloyl-D-alanyl-D-alanine + UDP + H(+). The protein operates within cell wall biogenesis; peptidoglycan biosynthesis. Cell wall formation. Catalyzes the transfer of a GlcNAc subunit on undecaprenyl-pyrophosphoryl-MurNAc-pentapeptide (lipid intermediate I) to form undecaprenyl-pyrophosphoryl-MurNAc-(pentapeptide)GlcNAc (lipid intermediate II). This Jannaschia sp. (strain CCS1) protein is UDP-N-acetylglucosamine--N-acetylmuramyl-(pentapeptide) pyrophosphoryl-undecaprenol N-acetylglucosamine transferase.